We begin with the raw amino-acid sequence, 468 residues long: Trehalose-2-sulfate acyltransferase PapA2 (468 aa).

The protein belongs to the PapA acyltransferase family.

It carries out the reaction 2-O-sulfo-alpha,alpha-trehalose + hexadecanoyl-CoA = 2-O-sulfo-2'-O-hexadecanoyl-alpha,alpha-trehalose + CoA. Its function is as follows. Catalyzes the acylation of trehalose-2-sulfate by adding the palmitoyl group at the 2'-position to yield the intermediate trehalose-2-sulfate-2'-palmitate (SL659). The sequence is that of Trehalose-2-sulfate acyltransferase PapA2 (papA2) from Mycobacterium tuberculosis (strain ATCC 25177 / H37Ra).